A 431-amino-acid chain; its full sequence is Enolase (431 aa).

Glutamine 167 provides a ligand contact to (2R)-2-phosphoglycerate. Glutamate 209 functions as the Proton donor in the catalytic mechanism. Mg(2+)-binding residues include aspartate 246, glutamate 289, and aspartate 316. Residues lysine 341, arginine 370, serine 371, and lysine 392 each contribute to the (2R)-2-phosphoglycerate site. The active-site Proton acceptor is the lysine 341.

Belongs to the enolase family. In terms of assembly, component of the RNA degradosome, a multiprotein complex involved in RNA processing and mRNA degradation. Requires Mg(2+) as cofactor.

The protein resides in the cytoplasm. The protein localises to the secreted. It localises to the cell surface. The catalysed reaction is (2R)-2-phosphoglycerate = phosphoenolpyruvate + H2O. It functions in the pathway carbohydrate degradation; glycolysis; pyruvate from D-glyceraldehyde 3-phosphate: step 4/5. Catalyzes the reversible conversion of 2-phosphoglycerate (2-PG) into phosphoenolpyruvate (PEP). It is essential for the degradation of carbohydrates via glycolysis. In Shewanella sp. (strain MR-4), this protein is Enolase.